Consider the following 129-residue polypeptide: uncharacterized protein (129 aa).

The segment covering 86–96 (NDGFSSDDEPE) has biased composition (acidic residues). The segment at 86-116 (NDGFSSDDEPEEHVILTEDNQGEPSETPQAT) is disordered. Positions 103–116 (EDNQGEPSETPQAT) are enriched in polar residues.

The protein belongs to the asfivirus D129L family.

This is an uncharacterized protein from African swine fever virus (strain Badajoz 1971 Vero-adapted) (Ba71V).